A 288-amino-acid chain; its full sequence is ATP synthase gamma chain (288 aa).

This sequence belongs to the ATPase gamma chain family. In terms of assembly, F-type ATPases have 2 components, CF(1) - the catalytic core - and CF(0) - the membrane proton channel. CF(1) has five subunits: alpha(3), beta(3), gamma(1), delta(1), epsilon(1). CF(0) has three main subunits: a, b and c.

The protein localises to the cell inner membrane. In terms of biological role, produces ATP from ADP in the presence of a proton gradient across the membrane. The gamma chain is believed to be important in regulating ATPase activity and the flow of protons through the CF(0) complex. The sequence is that of ATP synthase gamma chain from Aliivibrio fischeri (strain ATCC 700601 / ES114) (Vibrio fischeri).